Here is a 174-residue protein sequence, read N- to C-terminus: Crossover junction endodeoxyribonuclease RuvC (174 aa).

Active-site residues include aspartate 8, glutamate 68, and aspartate 140. The Mg(2+) site is built by aspartate 8, glutamate 68, and aspartate 140.

It belongs to the RuvC family. As to quaternary structure, homodimer which binds Holliday junction (HJ) DNA. The HJ becomes 2-fold symmetrical on binding to RuvC with unstacked arms; it has a different conformation from HJ DNA in complex with RuvA. In the full resolvosome a probable DNA-RuvA(4)-RuvB(12)-RuvC(2) complex forms which resolves the HJ. It depends on Mg(2+) as a cofactor.

It localises to the cytoplasm. It catalyses the reaction Endonucleolytic cleavage at a junction such as a reciprocal single-stranded crossover between two homologous DNA duplexes (Holliday junction).. In terms of biological role, the RuvA-RuvB-RuvC complex processes Holliday junction (HJ) DNA during genetic recombination and DNA repair. Endonuclease that resolves HJ intermediates. Cleaves cruciform DNA by making single-stranded nicks across the HJ at symmetrical positions within the homologous arms, yielding a 5'-phosphate and a 3'-hydroxyl group; requires a central core of homology in the junction. The consensus cleavage sequence is 5'-(A/T)TT(C/G)-3'. Cleavage occurs on the 3'-side of the TT dinucleotide at the point of strand exchange. HJ branch migration catalyzed by RuvA-RuvB allows RuvC to scan DNA until it finds its consensus sequence, where it cleaves and resolves the cruciform DNA. The chain is Crossover junction endodeoxyribonuclease RuvC from Legionella pneumophila (strain Paris).